The sequence spans 640 residues: Chaperone protein HtpG (640 aa).

The tract at residues 1–343 (MQTAENIEHL…SSDLPLNVSR (343 aa)) is a; substrate-binding. The segment at 344 to 564 (EILQESKDID…THDVSGNLGR (221 aa)) is b. Positions 565–640 (LLKSAGQKVP…LLLQNILSGK (76 aa)) are c.

It belongs to the heat shock protein 90 family. In terms of assembly, homodimer.

The protein resides in the cytoplasm. In terms of biological role, molecular chaperone. Has ATPase activity. The protein is Chaperone protein HtpG of Nitrosomonas europaea (strain ATCC 19718 / CIP 103999 / KCTC 2705 / NBRC 14298).